The chain runs to 357 residues: Chorismate synthase (357 aa).

The span at 38-49 (EKDIQPDLDRRK) shows a compositional bias: basic and acidic residues. The segment at 38–60 (EKDIQPDLDRRKPGTSRYTTPRR) is disordered. NADP(+)-binding residues include Arg-48 and Arg-54. FMN-binding positions include 125–127 (RSS), 243–244 (NA), Gly-283, 298–302 (KPTSS), and Arg-324.

The protein belongs to the chorismate synthase family. As to quaternary structure, homotetramer. Requires FMNH2 as cofactor.

The catalysed reaction is 5-O-(1-carboxyvinyl)-3-phosphoshikimate = chorismate + phosphate. It participates in metabolic intermediate biosynthesis; chorismate biosynthesis; chorismate from D-erythrose 4-phosphate and phosphoenolpyruvate: step 7/7. Functionally, catalyzes the anti-1,4-elimination of the C-3 phosphate and the C-6 proR hydrogen from 5-enolpyruvylshikimate-3-phosphate (EPSP) to yield chorismate, which is the branch point compound that serves as the starting substrate for the three terminal pathways of aromatic amino acid biosynthesis. This reaction introduces a second double bond into the aromatic ring system. In Haemophilus influenzae (strain PittGG), this protein is Chorismate synthase.